A 451-amino-acid polypeptide reads, in one-letter code: Tubulin beta-1 chain (451 aa).

The short motif at 1–4 (MREI) is the MREI motif element. GTP is bound by residues Gln11, Glu69, Ser138, Gly142, Thr143, and Gly144. Residue Glu69 coordinates Mg(2+). Ser172 is modified (phosphoserine; by CDK1). GTP is bound by residues Asn204 and Asn226. The interval 432–451 (LEEDEEVTEEAEMEPEDKGH) is disordered. Residues 433 to 451 (EEDEEVTEEAEMEPEDKGH) show a composition bias toward acidic residues. Position 440 is a 5-glutamyl polyglutamate (Glu440).

This sequence belongs to the tubulin family. In terms of assembly, dimer of alpha and beta chains. A typical microtubule is a hollow water-filled tube with an outer diameter of 25 nm and an inner diameter of 15 nM. Alpha-beta heterodimers associate head-to-tail to form protofilaments running lengthwise along the microtubule wall with the beta-tubulin subunit facing the microtubule plus end conferring a structural polarity. Microtubules usually have 13 protofilaments but different protofilament numbers can be found in some organisms and specialized cells. Interacts with RANBP10. It depends on Mg(2+) as a cofactor. Post-translationally, some glutamate residues at the C-terminus are polyglutamylated, resulting in polyglutamate chains on the gamma-carboxyl group. Polyglutamylation plays a key role in microtubule severing by spastin (SPAST). SPAST preferentially recognizes and acts on microtubules decorated with short polyglutamate tails: severing activity by SPAST increases as the number of glutamates per tubulin rises from one to eight, but decreases beyond this glutamylation threshold. Glutamylation is also involved in cilia motility. In terms of processing, some glutamate residues at the C-terminus are monoglycylated but not polyglycylated due to the absence of functional TTLL10 in human. Monoglycylation is mainly limited to tubulin incorporated into cilia and flagella axonemes, which is required for their stability and maintenance. Flagella glycylation controls sperm motility. Both polyglutamylation and monoglycylation can coexist on the same protein on adjacent residues, and lowering glycylation levels increases polyglutamylation, and reciprocally. Phosphorylated on Ser-172 by CDK1 during the cell cycle, from metaphase to telophase, but not in interphase. This phosphorylation inhibits tubulin incorporation into microtubules. In terms of tissue distribution, hematopoietic cell-specific. Major isotype in leukocytes, where it represents 50% of all beta-tubulins.

Its subcellular location is the cytoplasm. It localises to the cytoskeleton. Tubulin is the major constituent of microtubules, a cylinder consisting of laterally associated linear protofilaments composed of alpha- and beta-tubulin heterodimers. Microtubules grow by the addition of GTP-tubulin dimers to the microtubule end, where a stabilizing cap forms. Below the cap, tubulin dimers are in GDP-bound state, owing to GTPase activity of alpha-tubulin. This Homo sapiens (Human) protein is Tubulin beta-1 chain (TUBB1).